A 467-amino-acid polypeptide reads, in one-letter code: SVGFKAGVKEYKLTYYTPEYETKDTDILAAFRVSPQPGVPPEEAGAAVAAESSTGTWTTVWTDGLTNLDRYKGRCYHIDPVLGEEDQYIAYVAYPLDLFEEGSVTNMFTSIVGNVFGFKALRALRLEDLRIPTAYVKTFQGPPHGIQVERDKLNKYGRPLLGCTIKPKLGLSAKNYGRAVYECLRGGLDFTKDDENVNSQPFMRWRDRLLFCAEAIFKSQAETGEIKGHYLNATAGNCEEMMKRAVFARELGVPIVMHDYLTGGFTANTTLASYCRDNGLLLHIHRAMHAVIDRQKNHGIHFRVLAKALRMSGGDHIHSGTVVGKLEGERNITLSFVVLLRDDYIEKDRSRGIFFTQDWVSLPGVLPVASGGIHVWHMPALVEIFGDDSVLQFGGGTLGHPWGNAPGAVANRVSLEACVQARNEGRDLAREGNDIIREACKWSPELAAACEVWKEIKFEFTDMDTLD.

Lys-5 carries the post-translational modification N6,N6,N6-trimethyllysine. Substrate contacts are provided by Asn-114 and Thr-164. Lys-166 acts as the Proton acceptor in catalysis. A substrate-binding site is contributed by Lys-168. Positions 192, 194, and 195 each coordinate Mg(2+). Lys-192 is modified (N6-carboxylysine). His-285 functions as the Proton acceptor in the catalytic mechanism. Arg-286, His-318, and Ser-370 together coordinate substrate.

This sequence belongs to the RuBisCO large chain family. Type I subfamily. In terms of assembly, heterohexadecamer of 8 large chains and 8 small chains; disulfide-linked. The disulfide link is formed within the large subunit homodimers. Mg(2+) serves as cofactor. Post-translationally, the disulfide bond which can form in the large chain dimeric partners within the hexadecamer appears to be associated with oxidative stress and protein turnover.

The protein localises to the plastid. The protein resides in the chloroplast. The catalysed reaction is 2 (2R)-3-phosphoglycerate + 2 H(+) = D-ribulose 1,5-bisphosphate + CO2 + H2O. It carries out the reaction D-ribulose 1,5-bisphosphate + O2 = 2-phosphoglycolate + (2R)-3-phosphoglycerate + 2 H(+). Its function is as follows. RuBisCO catalyzes two reactions: the carboxylation of D-ribulose 1,5-bisphosphate, the primary event in carbon dioxide fixation, as well as the oxidative fragmentation of the pentose substrate in the photorespiration process. Both reactions occur simultaneously and in competition at the same active site. In Hydrophyllum virginianum (Eastern waterleaf), this protein is Ribulose bisphosphate carboxylase large chain.